The chain runs to 110 residues: U12-hexatoxin-Hi1a (110 aa).

The first 18 residues, 1-18, serve as a signal peptide directing secretion; sequence MRVALVFLVLSILAATHG. 3 cysteine pairs are disulfide-bonded: Cys-72–Cys-86, Cys-79–Cys-91, and Cys-85–Cys-104.

In terms of tissue distribution, expressed by the venom gland.

The protein localises to the secreted. Functionally, probable ion channel inhibitor. In Hadronyche infensa (Fraser island funnel-web spider), this protein is U12-hexatoxin-Hi1a.